The chain runs to 578 residues: Sulfite reductase [NADPH] hemoprotein beta-component (578 aa).

[4Fe-4S] cluster contacts are provided by C441, C447, C487, and C491. C491 contributes to the siroheme binding site.

It belongs to the nitrite and sulfite reductase 4Fe-4S domain family. As to quaternary structure, alpha(8)-beta(8). The alpha component is a flavoprotein, the beta component is a hemoprotein. It depends on siroheme as a cofactor. [4Fe-4S] cluster is required as a cofactor.

It catalyses the reaction hydrogen sulfide + 3 NADP(+) + 3 H2O = sulfite + 3 NADPH + 4 H(+). It functions in the pathway sulfur metabolism; hydrogen sulfide biosynthesis; hydrogen sulfide from sulfite (NADPH route): step 1/1. Its function is as follows. Component of the sulfite reductase complex that catalyzes the 6-electron reduction of sulfite to sulfide. This is one of several activities required for the biosynthesis of L-cysteine from sulfate. This Vibrio vulnificus (strain YJ016) protein is Sulfite reductase [NADPH] hemoprotein beta-component.